We begin with the raw amino-acid sequence, 764 residues long: Dehydrocurvularin biosynthesis regulator (764 aa).

The segment at residues 28–59 is a DNA-binding region (zn(2)-C6 fungal-type); it reads CWECKRRKMKCIFDPRITSTSCNGCRQRGSPC. Disordered regions lie at residues 73 to 94, 112 to 136, and 633 to 672; these read HGANDSASLDASTPIATPSDDA, YRYLPSSKSSDKRFTTRSSNDASTC, and FPTSINTNSDPVHVHSQADFPSSTQLSSSSHPNTPSPALS. Over residues 77 to 88 the composition is skewed to polar residues; the sequence is DSASLDASTPIA. A compositionally biased stretch (polar residues) spans 663–672; sequence HPNTPSPALS.

It localises to the nucleus. Its function is as follows. Transcription factor involved in regulation of the dehydrocurvularin biosynthesis gene cluster. The sequence is that of Dehydrocurvularin biosynthesis regulator from Alternaria cinerariae.